Here is a 123-residue protein sequence, read N- to C-terminus: TYMS opposite strand protein (123 aa).

Residues 57–111 (MRPLPRRIEVRTKRGPQRPAAPERSPQPRLPPSRHPSRRGPRRHLSGCSAPACRI) are disordered. Residues 91–101 (HPSRRGPRRHL) show a composition bias toward basic residues.

In Homo sapiens (Human), this protein is TYMS opposite strand protein (TYMSOS).